Consider the following 277-residue polypeptide: Ribosome-inactivating protein luffin-alpha (277 aa).

The first 19 residues, 1–19 (MKRFTVLILAIFVAASTVE), serve as a signal peptide directing secretion. Glu179 is a catalytic residue.

The protein belongs to the ribosome-inactivating protein family. Type 1 RIP subfamily.

The enzyme catalyses Endohydrolysis of the N-glycosidic bond at one specific adenosine on the 28S rRNA.. The sequence is that of Ribosome-inactivating protein luffin-alpha from Luffa aegyptiaca (Sponge gourd).